The chain runs to 344 residues: Melanocyte-stimulating hormone receptor (344 aa).

The Extracellular portion of the chain corresponds to 1–37 (MPMQGAQRKLLGSLNSTPTATSNPGLAANHTGAPCLE). The N-linked (GlcNAc...) asparagine glycan is linked to Asn-29. The helical transmembrane segment at 38–63 (VSIPDGLFLSLGLVSLVENVLVVAAI) threads the bilayer. The Cytoplasmic segment spans residues 64 to 72 (AKNRNLHSS). Residues 73-93 (MYYFICCLALSDLLVSGSNML) traverse the membrane as a helical segment. At 94–118 (ETAIILLLEAGTLATRASVVQQLHN) the chain is on the extracellular side. A helical transmembrane segment spans residues 119–140 (TIDVLTCSSMLCSLCFLGAIAV). The Cytoplasmic segment spans residues 141–163 (DRYISIFYALRYHSIMTLPRAQR). The chain crosses the membrane as a helical span at residues 164 to 183 (AIAAIWVASVLSSTLFITYY). At 184-191 (DHAAVLLC) the chain is on the extracellular side. A helical transmembrane segment spans residues 192–211 (LVVFFLAMLVLMAVLYVHML). The Cytoplasmic portion of the chain corresponds to 212–240 (ARACQHAQGIIRLHNRQLPAHKGFGLRGA). A helical transmembrane segment spans residues 241-266 (ATLTILLGIFFLCWGPFFLHLTLVVF). Residues 267–279 (CPQHLTCNCIFKN) lie on the Extracellular side of the membrane. A helical membrane pass occupies residues 280-300 (FKVFLTLIICNTIIDPLIYAF). Residues 301-344 (RSQELRRTLKEVLLCSSWPGCWAEGGGDSVWPGSCVTLRGPLPP) lie on the Cytoplasmic side of the membrane. Cys-315 carries the S-palmitoyl cysteine lipid modification.

Belongs to the G-protein coupled receptor 1 family. As to quaternary structure, interacts with MGRN1, but does not undergo MGRN1-mediated ubiquitination; this interaction competes with GNAS-binding and thus inhibits agonist-induced cAMP production. Interacts with OPN3; the interaction results in a decrease in MC1R-mediated cAMP signaling and ultimately a decrease in melanin production in melanocytes.

It localises to the cell membrane. Its function is as follows. Receptor for MSH (alpha, beta and gamma) and ACTH. The activity of this receptor is mediated by G proteins which activate adenylate cyclase. Mediates melanogenesis, the production of eumelanin (black/brown) and phaeomelanin (red/yellow), via regulation of cAMP signaling in melanocytes. The polypeptide is Melanocyte-stimulating hormone receptor (MC1R) (Callithrix jacchus (White-tufted-ear marmoset)).